The primary structure comprises 424 residues: Putative ankyrin repeat protein R858 (424 aa).

ANK repeat units follow at residues 115 to 144 (HLMC…FTKR), 147 to 177 (TDHT…SDYF), 184 to 215 (INDS…SINY), and 219 to 252 (TGST…DIHE).

The protein is Putative ankyrin repeat protein R858 of Acanthamoeba polyphaga (Amoeba).